Consider the following 196-residue polypeptide: MFSILKQVGDYAKGTVEAAKYIGQGLSVTFDHMRRRPVTVQYPYEKLIPSERYRGRIHFEFDKCIACEVCVRVCPINLPVVDWEFNKDAKKKELKHYSIDFGVCIFCGNCVEYCPTNCLSMTEEYELAAYDRHELNYDNVALGRLPYKVTQDPMVTPLRELGYLPKGVMSPHDLPEGSQRSGKRPEEIIEEAEASS.

2 consecutive 4Fe-4S ferredoxin-type domains span residues 55 to 84 and 95 to 124; these read GRIH…VDWE and KHYS…MTEE. [4Fe-4S] cluster-binding residues include cysteine 64, cysteine 67, cysteine 70, cysteine 74, cysteine 104, cysteine 107, cysteine 110, and cysteine 114. The segment at 170-196 is disordered; that stretch reads SPHDLPEGSQRSGKRPEEIIEEAEASS.

It belongs to the complex I 23 kDa subunit family. In terms of assembly, NDH-1 is composed of at least 11 different subunits. It depends on [4Fe-4S] cluster as a cofactor.

It localises to the cellular thylakoid membrane. The catalysed reaction is a plastoquinone + NADH + (n+1) H(+)(in) = a plastoquinol + NAD(+) + n H(+)(out). The enzyme catalyses a plastoquinone + NADPH + (n+1) H(+)(in) = a plastoquinol + NADP(+) + n H(+)(out). Its function is as follows. NDH-1 shuttles electrons from an unknown electron donor, via FMN and iron-sulfur (Fe-S) centers, to quinones in the respiratory and/or the photosynthetic chain. The immediate electron acceptor for the enzyme in this species is believed to be plastoquinone. Couples the redox reaction to proton translocation, and thus conserves the redox energy in a proton gradient. The chain is NAD(P)H-quinone oxidoreductase subunit I from Crocosphaera subtropica (strain ATCC 51142 / BH68) (Cyanothece sp. (strain ATCC 51142)).